Reading from the N-terminus, the 453-residue chain is Transcription factor bHLH110 (453 aa).

Disordered regions lie at residues 1-37 (MDSANLHQLQDQLQLVGSSSSSSSLDNNSDPSCYGAS) and 177-197 (SSLPSSSSSSSPSSQSHRGNF). Low complexity-rich tracts occupy residues 8–32 (QLQDQLQLVGSSSSSSSLDNNSDPS) and 177–192 (SSLPSSSSSSSPSSQS). The region spanning 322–371 (VESRSSCPPFKVRKEKLGDRIAALQQLVSPFGKTDTASVLMEAIGYIKFL) is the bHLH domain. Residues 386–411 (SRNRPGKASQLVSQSQEGDEEETRDL) form a disordered region.

As to quaternary structure, homodimer.

It is found in the nucleus. This is Transcription factor bHLH110 (BHLH110) from Arabidopsis thaliana (Mouse-ear cress).